The following is a 348-amino-acid chain: Glucan endo-1,3-beta-glucosidase, basic isoform (348 aa).

Gln1 is subject to Pyrrolidone carboxylic acid. Residue Glu95 is the Proton donor of the active site. Catalysis depends on Glu240, which acts as the Nucleophile. The propeptide at Ala317–Leu348 is removed in mature form.

This sequence belongs to the glycosyl hydrolase 17 family.

It localises to the vacuole. It catalyses the reaction Hydrolysis of (1-&gt;3)-beta-D-glucosidic linkages in (1-&gt;3)-beta-D-glucans.. Functionally, implicated in the defense of plants against pathogens. The sequence is that of Glucan endo-1,3-beta-glucosidase, basic isoform from Phaseolus vulgaris (Kidney bean).